A 58-amino-acid polypeptide reads, in one-letter code: Large ribosomal subunit protein uL30 (58 aa).

It belongs to the universal ribosomal protein uL30 family. Part of the 50S ribosomal subunit.

The polypeptide is Large ribosomal subunit protein uL30 (Zymomonas mobilis subsp. mobilis (strain ATCC 31821 / ZM4 / CP4)).